The primary structure comprises 538 residues: Mitochondria-eating protein (538 aa).

The segment at 1–273 (MAENLKRLVS…PRSRSCSRSR (273 aa)) is interaction with YWHAG/14-3-3 protein gamma. The residue at position 85 (serine 85) is a Phosphoserine. The tract at residues 92–137 (GKPVDSKVPSLQNTFDRERRKDPSPRDRDMQQLDSNLNSTRSQLNQ) is disordered. Basic and acidic residues predominate over residues 106 to 122 (FDRERRKDPSPRDRDMQ). Coiled-coil stretches lie at residues 118–186 (DRDM…ARHR) and 220–256 (QRDT…RSSR). Residues 123 to 137 (QLDSNLNSTRSQLNQ) show a composition bias toward polar residues. 2 positions are modified to phosphoserine: serine 156 and serine 159. Disordered stretches follow at residues 174-227 (LKTL…EVTS) and 247-292 (KSAL…NRSK). Composition is skewed to basic and acidic residues over residues 181 to 209 (EDAR…RRCE) and 216 to 227 (RNADQRDTEVTS). Residues 253 to 278 (RSSRSRSPSPAPRSRSCSRSRSASPS) show a composition bias toward low complexity. 3 positions are modified to phosphoserine: serine 285, serine 287, and serine 509.

Belongs to the MIEAP family. As to quaternary structure, interacts (via coiled-coil domains) with BNIP3L (via BH3 domain). Interacts (via coiled-coil domains) with BNIP3 (via BH3 domain). Interacts with YWHAG/14-3-3 protein gamma; a protein that also plays a role in MALM.

The protein resides in the cytoplasm. Its subcellular location is the cytosol. The protein localises to the mitochondrion outer membrane. It localises to the mitochondrion matrix. Functionally, key regulator of mitochondrial quality that mediates the repairing or degradation of unhealthy mitochondria in response to mitochondrial damage. Mediator of mitochondrial protein catabolic process (also named MALM) by mediating the degradation of damaged proteins inside mitochondria by promoting the accumulation in the mitochondrial matrix of hydrolases that are characteristic of the lysosomal lumen. Also involved in mitochondrion degradation of damaged mitochondria by promoting the formation of vacuole-like structures (named MIV), which engulf and degrade unhealthy mitochondria by accumulating lysosomes. The physical interaction of SPATA18/MIEAP, BNIP3 and BNIP3L/NIX at the mitochondrial outer membrane regulates the opening of a pore in the mitochondrial double membrane in order to mediate the translocation of lysosomal proteins from the cytoplasm to the mitochondrial matrix. Binds cardiolipin. May form molecular condensates (non-membrane-bounded organelles) within mitochondria that compartmentalize and promote cardiolipin metabolism. In Macaca fascicularis (Crab-eating macaque), this protein is Mitochondria-eating protein (SPATA18).